A 156-amino-acid chain; its full sequence is Ribosome maturation factor RimP (156 aa).

Belongs to the RimP family.

The protein resides in the cytoplasm. Its function is as follows. Required for maturation of 30S ribosomal subunits. This Bacillus cereus (strain G9842) protein is Ribosome maturation factor RimP.